A 116-amino-acid chain; its full sequence is Protein Wnt-5(I) (116 aa).

Ser1 carries O-palmitoleoyl serine; by PORCN lipidation. Asn69 carries an N-linked (GlcNAc...) asparagine glycan. A disulfide bridge connects residues Cys82 and Cys97.

The protein belongs to the Wnt family. Palmitoleoylation is required for efficient binding to frizzled receptors. Depalmitoleoylation leads to Wnt signaling pathway inhibition.

It localises to the secreted. Its subcellular location is the extracellular space. The protein localises to the extracellular matrix. Ligand for members of the frizzled family of seven transmembrane receptors. Probable developmental protein. May be a signaling molecule which affects the development of discrete regions of tissues. Is likely to signal over only few cell diameters. This is Protein Wnt-5(I) (WNT-5(I)) from Eptatretus stoutii (Pacific hagfish).